The chain runs to 461 residues: Thyroid hormone receptor beta (461 aa).

The tract at residues Met1–Gly24 is disordered. Residues Met1 to Leu106 are modulating. Residues Asp15–Gly24 show a composition bias toward basic and acidic residues. Residues Cys107, Cys110, Cys124, Cys127, Cys145, Cys151, Cys161, and Cys164 each coordinate Zn(2+). 2 NR C4-type zinc fingers span residues Cys107–Cys127 and Cys145–Cys169. Positions Cys107–Asp181 form a DNA-binding region, nuclear receptor. Residues Glu217–Asp461 form the NR LBD domain. The tract at residues Lys244–Asp461 is interaction with NR2F6. 3,3',5-triiodo-L-thyronine contacts are provided by Arg282, Asn331, and His435. Residues Arg282, Asn331, and His435 each coordinate L-thyroxine.

The protein belongs to the nuclear hormone receptor family. NR1 subfamily. As to quaternary structure, binds DNA as a dimer; homodimer and heterodimer with RXRB. Interacts with the coactivators NCOA1/SRC1, NCOA2/GRIP1, NCOA7 and MED1/TRAP220 in a ligand-inducible manner. Interacts with the corepressor NCOR1 in absence of ligand. Interacts with C1D. Interacts with NR2F6; the interaction impairs the binding of the THRB homodimer and THRB:RXRB heterodimer to T3 response elements. Interacts with PRMT2 and THRSP. Interacts with TACC1; this interaction is decreased in the presence of thyroid hormone T3.

It is found in the nucleus. Nuclear hormone receptor that can act as a repressor or activator of transcription. High affinity receptor for thyroid hormones, including triiodothyronine and thyroxine. This is Thyroid hormone receptor beta (Thrb) from Mus musculus (Mouse).